A 172-amino-acid chain; its full sequence is Crossover junction endodeoxyribonuclease RuvC (172 aa).

Residues aspartate 8, glutamate 67, and aspartate 139 contribute to the active site. Residues aspartate 8, glutamate 67, and aspartate 139 each coordinate Mg(2+).

Belongs to the RuvC family. Homodimer which binds Holliday junction (HJ) DNA. The HJ becomes 2-fold symmetrical on binding to RuvC with unstacked arms; it has a different conformation from HJ DNA in complex with RuvA. In the full resolvosome a probable DNA-RuvA(4)-RuvB(12)-RuvC(2) complex forms which resolves the HJ. Requires Mg(2+) as cofactor.

The protein resides in the cytoplasm. The catalysed reaction is Endonucleolytic cleavage at a junction such as a reciprocal single-stranded crossover between two homologous DNA duplexes (Holliday junction).. In terms of biological role, the RuvA-RuvB-RuvC complex processes Holliday junction (HJ) DNA during genetic recombination and DNA repair. Endonuclease that resolves HJ intermediates. Cleaves cruciform DNA by making single-stranded nicks across the HJ at symmetrical positions within the homologous arms, yielding a 5'-phosphate and a 3'-hydroxyl group; requires a central core of homology in the junction. The consensus cleavage sequence is 5'-(A/T)TT(C/G)-3'. Cleavage occurs on the 3'-side of the TT dinucleotide at the point of strand exchange. HJ branch migration catalyzed by RuvA-RuvB allows RuvC to scan DNA until it finds its consensus sequence, where it cleaves and resolves the cruciform DNA. In Hahella chejuensis (strain KCTC 2396), this protein is Crossover junction endodeoxyribonuclease RuvC.